A 335-amino-acid chain; its full sequence is Large ribosomal subunit protein uL3 (335 aa).

Residues 1 to 20 form a disordered region; sequence MATIHRPRRGSLAFSPRKRA.

It belongs to the universal ribosomal protein uL3 family. Part of the 50S ribosomal subunit. Forms a cluster with proteins L14 and L24e.

One of the primary rRNA binding proteins, it binds directly near the 3'-end of the 23S rRNA, where it nucleates assembly of the 50S subunit. This chain is Large ribosomal subunit protein uL3, found in Methanothrix thermoacetophila (strain DSM 6194 / JCM 14653 / NBRC 101360 / PT) (Methanosaeta thermophila).